The following is a 237-amino-acid chain: Uridylate kinase (237 aa).

11–14 is an ATP binding site; the sequence is KLSG. Gly53 contributes to the UMP binding site. Positions 54 and 58 each coordinate ATP. Residues Asp73 and 134-141 each bind UMP; that span reads TGNPFFTT. Thr161, Tyr167, and Asp170 together coordinate ATP.

It belongs to the UMP kinase family. In terms of assembly, homohexamer.

It localises to the cytoplasm. The enzyme catalyses UMP + ATP = UDP + ADP. It participates in pyrimidine metabolism; CTP biosynthesis via de novo pathway; UDP from UMP (UMPK route): step 1/1. Inhibited by UTP. Its function is as follows. Catalyzes the reversible phosphorylation of UMP to UDP. This Burkholderia lata (strain ATCC 17760 / DSM 23089 / LMG 22485 / NCIMB 9086 / R18194 / 383) protein is Uridylate kinase.